The chain runs to 291 residues: Verruculogen synthase (291 aa).

The active site involves tyrosine 68.

This sequence belongs to the PhyH family. Homodimer. The cofactor is Fe cation.

The catalysed reaction is fumitremorgin B + 2-oxoglutarate + AH2 + 2 O2 = verruculogen + succinate + A + CO2 + H2O. The protein operates within mycotoxin biosynthesis. Verruculogen synthase; part of the gene cluster that mediates the biosynthesis of fumitremorgins, indole alkaloids that carry not only intriguing chemical structures, but also interesting biological and pharmacological activities. The biosynthesis of fumitremorgin-type alkaloids begins by condensation of the two amino acids L-tryptophan and L-proline to brevianamide F, catalyzed by the non-ribosomal peptide synthetase ftmA. Brevianamide F is then prenylated by the prenyltransferase ftmPT1/ftmB in the presence of dimethylallyl diphosphate, resulting in the formation of tryprostatin B. The three cytochrome P450 monooxygenases, ftmP450-1/ftmC, ftmP450-2/ftmE and ftmP450-3/FtmG, are responsible for the conversion of tryprostatin B to 6-hydroxytryprostatin B, tryprostatin A to fumitremorgin C and fumitremorgin C to 12,13-dihydroxyfumitremorgin C, respectively. The putative methyltransferase ftmMT/ftmD is expected for the conversion of 6-hydroxytryprostatin B to tryprostatin A. FtmPT2/FtmH catalyzes the prenylation of 12,13-dihydroxyfumitre-morgin C in the presence of dimethylallyl diphosphate, resulting in the formation of fumitremorgin B. Fumitremorgin B is further converted to verruculogen by ftmOx1/ftmF via the insertion of an endoperoxide bond between the two prenyl moieties. In some fungal species, verruculogen is further converted to fumitremorgin A, but the enzymes involved in this step have not been identified yet. In Aspergillus fumigatus (Neosartorya fumigata), this protein is Verruculogen synthase.